Here is a 213-residue protein sequence, read N- to C-terminus: NADH-quinone oxidoreductase subunit I (213 aa).

4Fe-4S ferredoxin-type domains follow at residues 74 to 103 (RFIE…METS) and 113 to 142 (GNYS…HGIE). 8 residues coordinate [4Fe-4S] cluster: cysteine 83, cysteine 86, cysteine 89, cysteine 93, cysteine 122, cysteine 125, cysteine 128, and cysteine 132.

Belongs to the complex I 23 kDa subunit family. In terms of assembly, NDH-1 is composed of 14 different subunits. Subunits NuoA, H, J, K, L, M, N constitute the membrane sector of the complex. Requires [4Fe-4S] cluster as cofactor.

The protein localises to the cell inner membrane. The enzyme catalyses a quinone + NADH + 5 H(+)(in) = a quinol + NAD(+) + 4 H(+)(out). In terms of biological role, NDH-1 shuttles electrons from NADH, via FMN and iron-sulfur (Fe-S) centers, to quinones in the respiratory chain. The immediate electron acceptor for the enzyme in this species is believed to be ubiquinone. Couples the redox reaction to proton translocation (for every two electrons transferred, four hydrogen ions are translocated across the cytoplasmic membrane), and thus conserves the redox energy in a proton gradient. In Campylobacter jejuni subsp. doylei (strain ATCC BAA-1458 / RM4099 / 269.97), this protein is NADH-quinone oxidoreductase subunit I.